Consider the following 61-residue polypeptide: Large ribosomal subunit protein bL32 (61 aa).

The protein belongs to the bacterial ribosomal protein bL32 family.

The chain is Large ribosomal subunit protein bL32 from Ehrlichia chaffeensis (strain ATCC CRL-10679 / Arkansas).